The chain runs to 602 residues: NADH-quinone oxidoreductase subunit C/D (602 aa).

The tract at residues 1–192 (MVNNMTDLTA…DPFELTKAKQ (192 aa)) is NADH dehydrogenase I subunit C. Residues 216–602 (DFMFLNLGPN…IDFVMSDVDR (387 aa)) are NADH dehydrogenase I subunit D.

It in the N-terminal section; belongs to the complex I 30 kDa subunit family. The protein in the C-terminal section; belongs to the complex I 49 kDa subunit family. As to quaternary structure, NDH-1 is composed of 13 different subunits. Subunits NuoB, CD, E, F, and G constitute the peripheral sector of the complex.

It is found in the cell inner membrane. It carries out the reaction a quinone + NADH + 5 H(+)(in) = a quinol + NAD(+) + 4 H(+)(out). In terms of biological role, NDH-1 shuttles electrons from NADH, via FMN and iron-sulfur (Fe-S) centers, to quinones in the respiratory chain. The immediate electron acceptor for the enzyme in this species is believed to be ubiquinone. Couples the redox reaction to proton translocation (for every two electrons transferred, four hydrogen ions are translocated across the cytoplasmic membrane), and thus conserves the redox energy in a proton gradient. In Klebsiella pneumoniae subsp. pneumoniae (strain ATCC 700721 / MGH 78578), this protein is NADH-quinone oxidoreductase subunit C/D.